A 280-amino-acid chain; its full sequence is Hydroxyacyl-thioester dehydratase type 2, mitochondrial (280 aa).

The protein belongs to the HTD2 family.

It is found in the mitochondrion. Functionally, mitochondrial 3-hydroxyacyl-thioester dehydratase involved in fatty acid biosynthesis. Required for respiratory growth and for normal mitochondrial morphology. The polypeptide is Hydroxyacyl-thioester dehydratase type 2, mitochondrial (HTD2) (Saccharomyces cerevisiae (strain ATCC 204508 / S288c) (Baker's yeast)).